A 992-amino-acid polypeptide reads, in one-letter code: MEQQIHQAVEIAMSGTADPNLKNQAFAFINQIKSTEDGYKSCVDILVKSGAQPVNEGLKFFIFQVVDENIEKLSSEQLYSLNDQLFKTLSSYISNDVSDPIYLRNKFSQLFAKIFCYVYLNIYPNFFKSLFELISSNKQIALDYYTRIVIAIHYEIGDKFIARSRELQDRNNLLKDAIRLNDMNALVSSWGKILQVPSNSSEVLNNQLKIVGQYINWMEIGLFISNDYMRSIFQYLNKEHQRNETCMTLIEIISKKMKPSNKLELVGILDITNIINSIDLSENDDLEFVENIAKLINQVGQELLIVLENEPTLFSSINAQLAKLWPLIFSSLGHEYDDVSQHVFPFIQQYLLLCKKSPELGSLDLLSTLLNKIIIKMKFDDDANGVDDDDETEQFSEIRSKLKNFQDTIAVLKPDLYVEAITIVINESLFGGDKNWRKIELGLFELNNFSESLRNNLINLPKSEITNSKPFQIFQEFLVKLINSDLIINVNHPKIQIGFFDIVVKHYNFLNAQSSQQSLILRILEIFTSPLGLFNENEKVRLRSWYSFFRFVKLTKPSLNNTAFVENVVIKLQPLLVIKAELPTTDEDDDVVENGNFSSQLYLYESIGLLISLLSTDLMNHKIKFIDLVFQPLFNDLENCVSSSEQVKLNQPLISMQAHHCLMALGTFARGYDHDFQNKYSEEIRGKINNAAQVVLITLENFPKNELIRDAARFSFARFIPILKNQINIHLAKFVTLVLAANNLKISELTDFLSFLGQIVHNYKDDDNIYQLLNNLLTPLIKKIFELSSNSGEDALIPDIIRDKYQLKKAYMTFLSAIFLNHSASLFVTETNKQEFAEVVTSLLEYAYDLSETSVSKLAITQLINVVNFFGNGGKIHDPEDKYANNLPPVEGIDAFLMSRVTQLSFELPFQKQEFDLKDAQYRLIGQEISLLLKSYQQRGGDEFLSYLSNYLTNMGLSQSLMNDFGSNLVKLDARNFKKYFITFVTQLKGNK.

The protein belongs to the exportin family.

Its subcellular location is the nucleus. The protein resides in the cytoplasm. Functionally, tRNA nucleus export receptor which facilitates tRNA translocation across the nuclear pore complex. Involved in pre-tRNA splicing, probably by affecting the interaction of pre-tRNA with splicing endonuclease. The protein is Exportin-T (LOS1) of Scheffersomyces stipitis (strain ATCC 58785 / CBS 6054 / NBRC 10063 / NRRL Y-11545) (Yeast).